Consider the following 314-residue polypeptide: 4-hydroxy-3-methylbut-2-enyl diphosphate reductase (314 aa).

Residue cysteine 12 coordinates [4Fe-4S] cluster. (2E)-4-hydroxy-3-methylbut-2-enyl diphosphate-binding residues include histidine 41 and histidine 74. 2 residues coordinate dimethylallyl diphosphate: histidine 41 and histidine 74. Histidine 41 and histidine 74 together coordinate isopentenyl diphosphate. Cysteine 96 provides a ligand contact to [4Fe-4S] cluster. A (2E)-4-hydroxy-3-methylbut-2-enyl diphosphate-binding site is contributed by histidine 124. Histidine 124 serves as a coordination point for dimethylallyl diphosphate. Histidine 124 contacts isopentenyl diphosphate. The Proton donor role is filled by glutamate 126. Threonine 168 contacts (2E)-4-hydroxy-3-methylbut-2-enyl diphosphate. Cysteine 198 contacts [4Fe-4S] cluster. Positions 226, 227, 228, and 270 each coordinate (2E)-4-hydroxy-3-methylbut-2-enyl diphosphate. Positions 226, 227, 228, and 270 each coordinate dimethylallyl diphosphate. Isopentenyl diphosphate is bound by residues serine 226, serine 227, asparagine 228, and serine 270.

This sequence belongs to the IspH family. Requires [4Fe-4S] cluster as cofactor.

It carries out the reaction isopentenyl diphosphate + 2 oxidized [2Fe-2S]-[ferredoxin] + H2O = (2E)-4-hydroxy-3-methylbut-2-enyl diphosphate + 2 reduced [2Fe-2S]-[ferredoxin] + 2 H(+). The catalysed reaction is dimethylallyl diphosphate + 2 oxidized [2Fe-2S]-[ferredoxin] + H2O = (2E)-4-hydroxy-3-methylbut-2-enyl diphosphate + 2 reduced [2Fe-2S]-[ferredoxin] + 2 H(+). The protein operates within isoprenoid biosynthesis; dimethylallyl diphosphate biosynthesis; dimethylallyl diphosphate from (2E)-4-hydroxy-3-methylbutenyl diphosphate: step 1/1. It participates in isoprenoid biosynthesis; isopentenyl diphosphate biosynthesis via DXP pathway; isopentenyl diphosphate from 1-deoxy-D-xylulose 5-phosphate: step 6/6. Functionally, catalyzes the conversion of 1-hydroxy-2-methyl-2-(E)-butenyl 4-diphosphate (HMBPP) into a mixture of isopentenyl diphosphate (IPP) and dimethylallyl diphosphate (DMAPP). Acts in the terminal step of the DOXP/MEP pathway for isoprenoid precursor biosynthesis. The polypeptide is 4-hydroxy-3-methylbut-2-enyl diphosphate reductase (Ectopseudomonas mendocina (strain ymp) (Pseudomonas mendocina)).